Reading from the N-terminus, the 327-residue chain is Phenylalanine--tRNA ligase alpha subunit (327 aa).

Mg(2+) is bound at residue E252.

This sequence belongs to the class-II aminoacyl-tRNA synthetase family. Phe-tRNA synthetase alpha subunit type 1 subfamily. As to quaternary structure, tetramer of two alpha and two beta subunits. Mg(2+) serves as cofactor.

It is found in the cytoplasm. The catalysed reaction is tRNA(Phe) + L-phenylalanine + ATP = L-phenylalanyl-tRNA(Phe) + AMP + diphosphate + H(+). The sequence is that of Phenylalanine--tRNA ligase alpha subunit from Shewanella putrefaciens (strain CN-32 / ATCC BAA-453).